Consider the following 524-residue polypeptide: Bifunctional NAD(P)H-hydrate repair enzyme Nnr (524 aa).

The segment at 1-219 (MKVARVSEIK…ISYPRALLED (219 aa)) is NAD(P)H-hydrate epimerase. The YjeF N-terminal domain maps to 9-218 (IKLLDREAAE…HISYPRALLE (210 aa)). Positions 57 to 61 (NNGGD) are NADPHX 1; for epimerase activity. K(+) contacts are provided by asparagine 58 and aspartate 128. The segment at 132-138 (GTGLSRP) is NADPHX 1; for epimerase activity. Tyrosine 143 and aspartate 161 together coordinate (6S)-NADPHX. Position 164 (serine 164) interacts with K(+). A YjeF C-terminal domain is found at 224–507 (VETNDPVPLP…NYLPKALRAL (284 aa)). The ADP-dependent (S)-NAD(P)H-hydrate dehydratase stretch occupies residues 224–524 (VETNDPVPLP…LERYTIKVLP (301 aa)). A (6S)-NADPHX-binding site is contributed by glycine 330. The NADPHX 2; for dehydratase activity stretch occupies residues 381 to 387 (HAGEMSR). ADP contacts are provided by residues 418–422 (KGAHT) and 438–447 (NPGMATAGSG). Position 448 (aspartate 448) interacts with (6S)-NADPHX.

This sequence in the N-terminal section; belongs to the NnrE/AIBP family. In the C-terminal section; belongs to the NnrD/CARKD family. The cofactor is K(+).

It catalyses the reaction (6S)-NADHX + ADP = AMP + phosphate + NADH + H(+). The catalysed reaction is (6S)-NADPHX + ADP = AMP + phosphate + NADPH + H(+). The enzyme catalyses (6R)-NADHX = (6S)-NADHX. It carries out the reaction (6R)-NADPHX = (6S)-NADPHX. Its function is as follows. Bifunctional enzyme that catalyzes the epimerization of the S- and R-forms of NAD(P)HX and the dehydration of the S-form of NAD(P)HX at the expense of ADP, which is converted to AMP. This allows the repair of both epimers of NAD(P)HX, a damaged form of NAD(P)H that is a result of enzymatic or heat-dependent hydration. The polypeptide is Bifunctional NAD(P)H-hydrate repair enzyme Nnr (nnr) (Thermofilum pendens (strain DSM 2475 / Hrk 5)).